The primary structure comprises 366 residues: Purple acid phosphatase 3 (366 aa).

The N-terminal stretch at 1 to 32 (MTYIYRDTKITTKSTIPFLIFFLFCFSNLSMA) is a signal peptide. Residue Asp-81 participates in Fe cation binding. Asn-89 carries an N-linked (GlcNAc...) asparagine glycan. Fe cation-binding residues include Asp-114 and Tyr-117. Residue Asp-114 coordinates Zn(2+). Residues Asn-152 and His-246 each coordinate Zn(2+). His-255 functions as the Proton donor in the catalytic mechanism. His-281 is a Zn(2+) binding site. 281 to 283 (HDH) is a substrate binding site. Fe cation is bound at residue His-283.

The protein belongs to the metallophosphoesterase superfamily. Purple acid phosphatase family. In terms of assembly, homodimer. The cofactor is Fe cation. It depends on Zn(2+) as a cofactor. Expressed in stems, leaves, flowers and siliques.

Its subcellular location is the secreted. It carries out the reaction a phosphate monoester + H2O = an alcohol + phosphate. The protein is Purple acid phosphatase 3 (PAP3) of Arabidopsis thaliana (Mouse-ear cress).